A 706-amino-acid polypeptide reads, in one-letter code: Axin-related protein (706 aa).

The RGS domain maps to 72–191; it reads SLNLLLDDQD…LQSDICKEYA (120 aa). 3 disordered regions span residues 278 to 298, 400 to 482, and 585 to 605; these read MTDG…REIH, TPAN…GTSA, and STTL…GFST. Over residues 402 to 412 the composition is skewed to polar residues; the sequence is ANLSPRSQSPF. The span at 453–462 shows a compositional bias: low complexity; sequence RSSVSSQLPR. The DIX domain maps to 624-706; that stretch reads GQGLAIVYYF…KIICKVERAC (83 aa).

In terms of assembly, interacts with dvl2/dsh via DIX domains in both proteins. Forms a complex with ctnnb1/beta-catenin and gsk3b. Also forms heterodimers with mouse Axin1.

It is found in the cytoplasm. Its subcellular location is the cytoplasmic vesicle. Regulates the wnt signaling pathway by interacting with dvl2/dsh, which displaces gsk3b from the axnr-gsk3b complex and thus prevents degradation of ctnnb1/beta-catenin. The sequence is that of Axin-related protein from Xenopus laevis (African clawed frog).